The following is a 307-amino-acid chain: Ornithine carbamoyltransferase (307 aa).

Residues 54-57 (STRT), glutamine 81, arginine 105, and 132-135 (HPCQ) contribute to the carbamoyl phosphate site. Residues asparagine 163, aspartate 221, and 225-226 (SM) each bind L-ornithine. Residues 261–262 (CL) and arginine 289 each bind carbamoyl phosphate.

This sequence belongs to the aspartate/ornithine carbamoyltransferase superfamily. OTCase family.

It is found in the cytoplasm. The enzyme catalyses carbamoyl phosphate + L-ornithine = L-citrulline + phosphate + H(+). Its pathway is amino-acid biosynthesis; L-arginine biosynthesis; L-arginine from L-ornithine and carbamoyl phosphate: step 1/3. In terms of biological role, reversibly catalyzes the transfer of the carbamoyl group from carbamoyl phosphate (CP) to the N(epsilon) atom of ornithine (ORN) to produce L-citrulline. In Aromatoleum aromaticum (strain DSM 19018 / LMG 30748 / EbN1) (Azoarcus sp. (strain EbN1)), this protein is Ornithine carbamoyltransferase.